Consider the following 737-residue polypeptide: Angiotensin-converting enzyme-like protein Ace3 (737 aa).

The first 23 residues, 1–23, serve as a signal peptide directing secretion; it reads MNLPWALLLVLLSHRQLLPWLRT. Topologically, residues 24–639 are extracellular; that stretch reads VGETSLNDFY…TDTEPEQAYL (616 aa). One can recognise a Peptidase M2 domain in the interval 32-611; the sequence is FYSEAQAKLF…VKQGDTLGWP (580 aa). Cysteines 146 and 152 form a disulfide. The chloride site is built by Arg180 and Tyr218. The cysteines at positions 346 and 364 are disulfide-linked. Zn(2+) contacts are provided by His377 and His381. Asn390 carries an N-linked (GlcNAc...) asparagine glycan. Glu405 lines the Zn(2+) pocket. The chloride site is built by Trp479, Arg483, and Arg516. A disulfide bridge connects residues Cys532 and Cys544. A helical transmembrane segment spans residues 640–660; that stretch reads GQWVLLSMSFFMLVLILALGF. The Cytoplasmic portion of the chain corresponds to 661–700; that stretch reads RLHYLEKQLLDEDTMILKTLPYSYFLGIAMEPHQAARKQW. Residues 701–721 form a helical membrane-spanning segment; it reads LLLGLCCILMLCCIGLLIRIV. Over 722–737 the chain is Extracellular; it reads TQNTENTPWMKNEGQS.

This sequence belongs to the peptidase M2 family. Interacts with IZUMO1. It depends on Zn(2+) as a cofactor. As to expression, expressed in sperm and testis (at protein level). Expressed in heart and testis. Not detected in kidney, lung, liver, brain, ovary, spleen and thymus.

The protein resides in the cytoplasmic vesicle. The protein localises to the secretory vesicle. It is found in the acrosome membrane. The protein is Angiotensin-converting enzyme-like protein Ace3 of Mus musculus (Mouse).